We begin with the raw amino-acid sequence, 882 residues long: MTDHKEMSTKYDPNQVEDGRYQDWLKEDLFKPNANPDAKPYSIVIPPPNVTGKLHLGHAWDTTLQDMLIRQKRMQGYDVLWLPGMDHAGIATQAKVEAKLAEQGISRYDLGREKFIDQVWEWKDEYAATIHDQWAKMGLSLDYSRERFTLDDGLSDAVRKVFVNLYNKGLIYRGEYIINWDPKARTALSDIEVLHQDDEGAFYHVSYPLTDGSGSIEIATTRPETLPGDTAIAVHPDDERYADLVGKTVTLPLMNREIPIIADHYVDKDFGTGALKITPAHDPNDFEVGNRHDLPRINVMNEDASMNESAGKYNGMDRFEARKAIVADLKEQGFLIKVDPMTHSVGHSERTGVQVEARLSTQWFVKMKPLAEMALKNQETDQKVNFVPERFENTFTQWMENVHDWVISRQLWWGHQIPAWYHKQTGEMYVGEEAPEDIENWTQDSDVLDTWFSSALWPFSTMGWPNTEAPDFKRYFPTNTLVTGYDIIFFWVSRMIFQSLEFTEQRPFEHVLIHGLIRDEQGRKMSKSLGNGIDPMEVIEKYGADALRWFLTSGSTPGQDVRFSYTKMDAAWNFINKIWNASRFVIMNLEDTPAPTKVPEAANLDLTDKWILSQLNQTVADVTRLYEGFEFGEAGRTLYNFIWNDFCDWYIEMAKEVLYGDDQEAIANKRYNLAYVLDQTLRLLHPVMPFVTEEIWQSMPHTGESIMTASYPEVHAELDDQEATTQMNALIDLIRSVRNIRSEANAPLSKPIDILINIQDTPLMAIFKQNQDFIERFVHPKSLEIAEGLTAPALAKTAIISGAEVYVPLAELLDLDEEITRLEGELKRLNGEIKRAQGKLANKGFTDRAPEKVVQEERDKQADYEQQYQSVEKRLAELKAAR.

The short motif at 48–58 (PNVTGKLHLGH) is the 'HIGH' region element. The 'KMSKS' region motif lies at 524–528 (KMSKS). Lys527 provides a ligand contact to ATP. Positions 809–882 (LAELLDLDEE…KRLAELKAAR (74 aa)) form a coiled coil. Residues 844-866 (GFTDRAPEKVVQEERDKQADYEQ) are disordered. A compositionally biased stretch (basic and acidic residues) spans 845 to 863 (FTDRAPEKVVQEERDKQAD).

The protein belongs to the class-I aminoacyl-tRNA synthetase family. ValS type 1 subfamily. As to quaternary structure, monomer.

It localises to the cytoplasm. The catalysed reaction is tRNA(Val) + L-valine + ATP = L-valyl-tRNA(Val) + AMP + diphosphate. Its function is as follows. Catalyzes the attachment of valine to tRNA(Val). As ValRS can inadvertently accommodate and process structurally similar amino acids such as threonine, to avoid such errors, it has a 'posttransfer' editing activity that hydrolyzes mischarged Thr-tRNA(Val) in a tRNA-dependent manner. The chain is Valine--tRNA ligase from Latilactobacillus sakei subsp. sakei (strain 23K) (Lactobacillus sakei subsp. sakei).